Reading from the N-terminus, the 291-residue chain is DNA repair protein RecO (291 aa).

It belongs to the RecO family.

Its function is as follows. Involved in DNA repair and RecF pathway recombination. This chain is DNA repair protein RecO, found in Cupriavidus pinatubonensis (strain JMP 134 / LMG 1197) (Cupriavidus necator (strain JMP 134)).